Reading from the N-terminus, the 497-residue chain is UDP-N-acetylmuramoyl-L-alanyl-D-glutamate--2,6-diaminopimelate ligase (497 aa).

Residues leucine 27 and serine 29 each coordinate UDP-N-acetyl-alpha-D-muramoyl-L-alanyl-D-glutamate. ATP is bound at residue 116 to 122; sequence GTNGKTT. UDP-N-acetyl-alpha-D-muramoyl-L-alanyl-D-glutamate is bound by residues asparagine 157, 158-159, serine 185, glutamine 191, and arginine 193; that span reads TT. An N6-carboxylysine modification is found at lysine 225. Meso-2,6-diaminopimelate is bound by residues arginine 392, 416-419, glycine 467, and glutamate 471; that span reads DNPR. The short motif at 416 to 419 is the Meso-diaminopimelate recognition motif element; sequence DNPR.

This sequence belongs to the MurCDEF family. MurE subfamily. The cofactor is Mg(2+). In terms of processing, carboxylation is probably crucial for Mg(2+) binding and, consequently, for the gamma-phosphate positioning of ATP.

It is found in the cytoplasm. The catalysed reaction is UDP-N-acetyl-alpha-D-muramoyl-L-alanyl-D-glutamate + meso-2,6-diaminopimelate + ATP = UDP-N-acetyl-alpha-D-muramoyl-L-alanyl-gamma-D-glutamyl-meso-2,6-diaminopimelate + ADP + phosphate + H(+). The protein operates within cell wall biogenesis; peptidoglycan biosynthesis. Its function is as follows. Catalyzes the addition of meso-diaminopimelic acid to the nucleotide precursor UDP-N-acetylmuramoyl-L-alanyl-D-glutamate (UMAG) in the biosynthesis of bacterial cell-wall peptidoglycan. The sequence is that of UDP-N-acetylmuramoyl-L-alanyl-D-glutamate--2,6-diaminopimelate ligase from Buchnera aphidicola subsp. Schizaphis graminum (strain Sg).